A 466-amino-acid chain; its full sequence is Chromosomal replication initiator protein DnaA (466 aa).

Residues 1 to 86 (MSLSLWQQCL…EVGTKPVTQT (86 aa)) are domain I, interacts with DnaA modulators. Residues 86 to 129 (TLKTPVHNVVAPAQTTTAQPQRVAPAARSGWDNVPAPAEPTYRS) are domain II. Positions 130–346 (NVNVKHTFDN…GALNRVIANA (217 aa)) are domain III, AAA+ region. Positions 174, 176, 177, and 178 each coordinate ATP. The tract at residues 347–466 (NFTGRAITID…FSNLIRTLSS (120 aa)) is domain IV, binds dsDNA.

Belongs to the DnaA family. As to quaternary structure, oligomerizes as a right-handed, spiral filament on DNA at oriC.

It localises to the cytoplasm. In terms of biological role, plays an essential role in the initiation and regulation of chromosomal replication. ATP-DnaA binds to the origin of replication (oriC) to initiate formation of the DNA replication initiation complex once per cell cycle. Binds the DnaA box (a 9 base pair repeat at the origin) and separates the double-stranded (ds)DNA. Forms a right-handed helical filament on oriC DNA; dsDNA binds to the exterior of the filament while single-stranded (ss)DNA is stabiized in the filament's interior. The ATP-DnaA-oriC complex binds and stabilizes one strand of the AT-rich DNA unwinding element (DUE), permitting loading of DNA polymerase. After initiation quickly degrades to an ADP-DnaA complex that is not apt for DNA replication. Binds acidic phospholipids. This chain is Chromosomal replication initiator protein DnaA, found in Salmonella agona (strain SL483).